Reading from the N-terminus, the 343-residue chain is Tetraacyldisaccharide 4'-kinase (343 aa).

Histidine 51 to threonine 58 is an ATP binding site.

It belongs to the LpxK family.

The enzyme catalyses a lipid A disaccharide + ATP = a lipid IVA + ADP + H(+). The protein operates within glycolipid biosynthesis; lipid IV(A) biosynthesis; lipid IV(A) from (3R)-3-hydroxytetradecanoyl-[acyl-carrier-protein] and UDP-N-acetyl-alpha-D-glucosamine: step 6/6. Its function is as follows. Transfers the gamma-phosphate of ATP to the 4'-position of a tetraacyldisaccharide 1-phosphate intermediate (termed DS-1-P) to form tetraacyldisaccharide 1,4'-bis-phosphate (lipid IVA). In Rhodopseudomonas palustris (strain BisB18), this protein is Tetraacyldisaccharide 4'-kinase.